The primary structure comprises 310 residues: Keratin, type II cytoskeletal 8 (310 aa).

The disordered stretch occupies residues 1-38 (QRTLKVSSSGPRSFSSRSFSSGPSSRISSSSYSRVGSN). Lys5 participates in a covalent cross-link: Glycyl lysine isopeptide (Lys-Gly) (interchain with G-Cter in SUMO2). Ser7, Ser9, Ser15, and Ser16 each carry phosphoserine. The span at 7–38 (SSSGPRSFSSRSFSSGPSSRISSSSYSRVGSN) shows a compositional bias: low complexity. An Omega-N-methylarginine modification is found at Arg17. Phosphoserine occurs at positions 18, 21, and 25. An Omega-N-methylarginine modification is found at Arg26. Residues Ser28, Ser31, and Ser33 each carry the phosphoserine modification. Arg34 carries the omega-N-methylarginine modification. Residue Ser37 is modified to Phosphoserine. Asymmetric dimethylarginine; alternate is present on Arg42. The residue at position 42 (Arg42) is an Omega-N-methylarginine; alternate. The interval 92–127 (EKEQIKTLNNKFASFIDKVRFLEQQNKILETKWSFL) is coil 1A. The region spanning 92 to 310 (EKEQIKTLNN…LRHTKTEISE (219 aa)) is the IF rod domain. Residue Lys102 is modified to N6-malonyllysine. Residues Lys123 and Lys131 each participate in a glycyl lysine isopeptide (Lys-Gly) (interchain with G-Cter in SUMO2) cross-link. The linker 1 stretch occupies residues 128–144 (QQQKTSQSNLDGLFEKY). Residues 145 to 236 (ITNLRRQLDS…HLYEEEIKEM (92 aa)) form a coil 1B region. Residue Lys198 forms a Glycyl lysine isopeptide (Lys-Gly) (interchain with G-Cter in SUMO1); alternate linkage. Lys198 is covalently cross-linked (Glycyl lysine isopeptide (Lys-Gly) (interchain with G-Cter in SUMO2); alternate). At Lys208 the chain carries N6-acetyllysine. The residue at position 229 (Tyr229) is a Phosphotyrosine. A linker 12 region spans residues 237-260 (QSQISDTSVVVSMDNSRSLDLDGI). A phosphoserine mark is found at Ser254 and Ser275. A coil 2 region spans residues 261–310 (IADVRAQYEEIANRSRAEAETMYQIKYEELQLLAGKHGDDLRHTKTEISE). A Glycyl lysine isopeptide (Lys-Gly) (interchain with G-Cter in SUMO2) cross-link involves residue Lys286. Residue Lys296 forms a Glycyl lysine isopeptide (Lys-Gly) (interchain with G-Cter in SUMO2); alternate linkage. An N6-acetyllysine; alternate modification is found at Lys296. Lys305 participates in a covalent cross-link: Glycyl lysine isopeptide (Lys-Gly) (interchain with G-Cter in SUMO2).

The protein belongs to the intermediate filament family. As to quaternary structure, heterotetramer of two type I and two type II keratins. Forms a heterodimer with KRT18. Associates with KRT20. Interacts with PNN. When associated with KRT19, interacts with DMD. Interacts with APEX1. Interacts with GPER1. Interacts with EPPK1. Interacts with PKP1 and PKP2. In terms of processing, O-glycosylated. O-GlcNAcylation at multiple sites increases solubility, and decreases stability by inducing proteasomal degradation. Post-translationally, O-glycosylated (O-GlcNAcylated), in a cell cycle-dependent manner.

Its subcellular location is the cytoplasm. It is found in the nucleus. The protein localises to the nucleoplasm. The protein resides in the nucleus matrix. In terms of biological role, together with KRT19, helps to link the contractile apparatus to dystrophin at the costameres of striated muscle. The chain is Keratin, type II cytoskeletal 8 from Potorous tridactylus (Potoroo).